The following is a 45-amino-acid chain: Large ribosomal subunit protein bL34c (45 aa).

Polar residues predominate over residues 1 to 10 (MSKGFSNGTN). Residues 1–45 (MSKGFSNGTNIKRVRKSGFRARMSNSSGRKILNSRRRKQRKKIAL) are disordered. A compositionally biased stretch (basic residues) spans 32-45 (LNSRRRKQRKKIAL).

This sequence belongs to the bacterial ribosomal protein bL34 family.

Its subcellular location is the plastid. It localises to the chloroplast. The sequence is that of Large ribosomal subunit protein bL34c from Gracilaria tenuistipitata var. liui (Red alga).